Consider the following 1807-residue polypeptide: Nucleoporin nup189 (1807 aa).

Positions 1-118 are disordered; sequence MFGQNNSSGF…SGGGLFGSNT (118 aa). 2 GLFG repeats span residues 26-29 and 66-69; these read GLFG. Residues 29–61 are compositionally biased toward polar residues; the sequence is GSNSNTPGNTLFGSQNTSTTGFGQNTTQPLFGS. Over residues 62–77 the composition is skewed to low complexity; the sequence is NTNGGLFGNRNNTTTT. The segment covering 78 to 90 has biased composition (gly residues); the sequence is GGTGFGMSSGTGM. Positions 93-108 are enriched in polar residues; it reads QSNTPAFGGTNNATNP. 10 GLFG repeats span residues 112-115, 152-155, 177-180, 308-311, 335-338, 350-353, 381-384, 399-402, 435-438, and 521-524; these read GLFG. A compositionally biased stretch (polar residues) spans 565–584; sequence PGTGLFGSTQTNNATSNTGT. Residues 565–685 are disordered; that stretch reads PGTGLFGSTQ…SSTTSQVAPT (121 aa). GLFG repeat units lie at residues 585-588, 611-614, 627-630, and 646-649; these read GLFG. The span at 588 to 600 shows a compositional bias: low complexity; the sequence is GSNNANTTNTGGS. The span at 603-644 shows a compositional bias: polar residues; the sequence is NKPSTTTGGLFGNTTAQQPSTTTSGLFGASNTNNQAQTSNFG. The span at 653 to 663 shows a compositional bias: low complexity; sequence AGQQQQPLQAS. Over residues 664–685 the composition is skewed to polar residues; sequence IDQNPYGNNPLFSSTTSQVAPT. At serine 724 the chain carries Phosphoserine. Residues 785–814 are disordered; it reads QNGVKNGNDAKSDSKVQEKAPQNEADGSLK. Basic and acidic residues predominate over residues 792 to 802; that stretch reads NDAKSDSKVQE. The region spanning 822 to 963 is the Peptidase S59 domain; that stretch reads SDDYWMKPSI…GKWIFKVQHF (142 aa). The interval 974–1020 is disordered; that stretch reads EENDMSSTSNEAGNLKKYDQPNLKVSGKNDSFVTHHTPGAFPNDSKN. Position 1051 is a phosphoserine (serine 1051). The segment at 1082–1104 is disordered; it reads KENNVPLSEDDLSNSSESSNESV. Residues 1094-1104 are compositionally biased toward low complexity; the sequence is SNSSESSNESV.

It belongs to the nucleoporin GLFG family. Interacts (via G-L-F-G repeats) with rpn15/dss1. Interacts with raf1. As to quaternary structure, interacts with ned1. In terms of processing, nup189 is autocatalytically cleaved in nup98 and nup96.

It is found in the nucleus. The protein localises to the nuclear pore complex. Functionally, functions as a component of the nuclear pore complex (NPC). NPC components, collectively referred to as nucleoporins (NUPs), can play the role of both NPC structural components and of docking or interaction partners for transiently associated nuclear transport factors. Active directional transport is assured by both, a Phe-Gly (FG) repeat affinity gradient for these transport factors across the NPC and a transport cofactor concentration gradient across the nuclear envelope. Nup189 is autocatalytically cleaved in vivo in 2 polypeptides which assume different functions in the NPC. Nup98 as one of the FG repeat nucleoporins participates in karyopherin interactions and contains part of the autocatalytic cleavage activity. Nup96 as part of the NUP84 complex is involved in nuclear poly(A)+ RNA and tRNA export. This chain is Nucleoporin nup189 (nup189), found in Schizosaccharomyces pombe (strain 972 / ATCC 24843) (Fission yeast).